The chain runs to 202 residues: Urease accessory protein UreE (202 aa).

Positions 171-188 (HHGHSHSHDHDHDHDHQH) are enriched in basic and acidic residues. The tract at residues 171-202 (HHGHSHSHDHDHDHDHQHGPGCTHGHRGHDHH) is disordered.

It belongs to the UreE family.

The protein resides in the cytoplasm. Functionally, involved in urease metallocenter assembly. Binds nickel. Probably functions as a nickel donor during metallocenter assembly. This Burkholderia ambifaria (strain ATCC BAA-244 / DSM 16087 / CCUG 44356 / LMG 19182 / AMMD) (Burkholderia cepacia (strain AMMD)) protein is Urease accessory protein UreE.